Here is a 224-residue protein sequence, read N- to C-terminus: Deoxyribose-phosphate aldolase (224 aa).

Residue aspartate 92 is the Proton donor/acceptor of the active site. Lysine 154 (schiff-base intermediate with acetaldehyde) is an active-site residue. Lysine 183 serves as the catalytic Proton donor/acceptor.

This sequence belongs to the DeoC/FbaB aldolase family. DeoC type 1 subfamily.

The protein localises to the cytoplasm. The enzyme catalyses 2-deoxy-D-ribose 5-phosphate = D-glyceraldehyde 3-phosphate + acetaldehyde. Its pathway is carbohydrate degradation; 2-deoxy-D-ribose 1-phosphate degradation; D-glyceraldehyde 3-phosphate and acetaldehyde from 2-deoxy-alpha-D-ribose 1-phosphate: step 2/2. Functionally, catalyzes a reversible aldol reaction between acetaldehyde and D-glyceraldehyde 3-phosphate to generate 2-deoxy-D-ribose 5-phosphate. The chain is Deoxyribose-phosphate aldolase from Actinobacillus succinogenes (strain ATCC 55618 / DSM 22257 / CCUG 43843 / 130Z).